The chain runs to 495 residues: Putative aldehyde dehydrogenase AldA (495 aa).

Gly-212–Gly-218 serves as a coordination point for NAD(+). Catalysis depends on residues Glu-256 and Cys-290.

It belongs to the aldehyde dehydrogenase family.

It carries out the reaction an aldehyde + NAD(+) + H2O = a carboxylate + NADH + 2 H(+). This is Putative aldehyde dehydrogenase AldA (aldA) from Staphylococcus aureus (strain USA300).